Here is a 349-residue protein sequence, read N- to C-terminus: MAAIASTLSLSSTKPQRLFDSSFHGSAISAAPISIGLKPRSFSVRATTAGYDLNAFTFDPIKESIVSREMTRRYMTDMITYAETDVVVVGAGSAGLSAAYEISKNPNVQVAIIEQSVSPGGGAWLGGQLFSAMIVRKPAHLFLDEIGVAYDEQDTYVVVKHAALFTSTIMSKLLARPNVKLFNAVAAEDLIVKGNRVGGVVTNWALVAQNHHTQSCMDPNVMEAKIVVSSCGHDGPFGATGVKRLKSIGMIDHVPGMKALDMNTAEDAIVRLTREVVPGMIVTGMEVAEIDGAPRMGPTFGAMMISGQKAGQLALKALGLPNAIDGTLVGNLSPELVLAAADSAETVDA.

A chloroplast-targeting transit peptide spans 1 to 45 (MAAIASTLSLSSTKPQRLFDSSFHGSAISAAPISIGLKPRSFSVR). Substrate contacts are provided by residues alanine 94, 114–115 (EQ), glycine 122, and alanine 187. Position 216 is a 2,3-didehydroalanine (Cys) (cysteine 216). Residues aspartate 218, histidine 233, methionine 285, and 295–297 (RMG) each bind substrate.

Belongs to the THI4 family. Homooctamer. Interacts with RBCX1 and RBCX1. Interacts with CPK33. Fe cation is required as a cofactor. In terms of processing, during the catalytic reaction, a sulfide is transferred from Cys-216 to a reaction intermediate, generating a dehydroalanine residue. Not phosphorylated in vitro by CPK33. Expressed at high levels in chloroplast-containing parenchymatic cells of leaves, inflorescence shoots and flowers, and at lower levels in the vascular system. In young plants, detected in roots and shoots including cotyledons, leaves and hypocotyls. Also observed in apical meristematic regions, siliques and embryos. Low expression in roots, limited to the vascular tissue. Broadly expressed in roots, cotyledons, leaves, hypocotyls, inflorescences, siliques, and strongly in guard cells.

The protein resides in the plastid. It localises to the chloroplast. The protein localises to the mitochondrion. It is found in the cell membrane. The enzyme catalyses [ADP-thiazole synthase]-L-cysteine + glycine + NAD(+) = [ADP-thiazole synthase]-dehydroalanine + ADP-5-ethyl-4-methylthiazole-2-carboxylate + nicotinamide + 3 H2O + 2 H(+). Its function is as follows. Involved in biosynthesis of the thiamine precursor thiazole. Catalyzes the conversion of NAD and glycine to adenosine diphosphate 5-(2-hydroxyethyl)-4-methylthiazole-2-carboxylic acid (ADT), an adenylated thiazole intermediate. The reaction includes an iron-dependent sulfide transfer from a conserved cysteine residue of the protein to a thiazole intermediate. The enzyme can only undergo a single turnover, which suggests it is a suicide enzyme. May have additional roles in adaptation to various stress conditions and in DNA damage tolerance. Acts as a positive regulator for the abscisic acid-induced activation of slow type anion channels during stomatal closure by repressing CPK33 kinase activity. The sequence is that of Thiamine thiazole synthase, chloroplastic from Arabidopsis thaliana (Mouse-ear cress).